Here is a 385-residue protein sequence, read N- to C-terminus: Putative nickel insertion protein (385 aa).

The protein belongs to the LarC family.

This chain is Putative nickel insertion protein, found in Citrifermentans bemidjiense (strain ATCC BAA-1014 / DSM 16622 / JCM 12645 / Bem) (Geobacter bemidjiensis).